A 677-amino-acid chain; its full sequence is Methionine--tRNA ligase (677 aa).

The 'HIGH' region signature appears at Pro-14 to His-24. Zn(2+)-binding residues include Cys-145, Cys-148, Cys-158, and Cys-161. Residues Lys-330–Ser-334 carry the 'KMSKS' region motif. ATP is bound at residue Lys-333. Residues Asp-576–Met-677 enclose the tRNA-binding domain.

This sequence belongs to the class-I aminoacyl-tRNA synthetase family. MetG type 1 subfamily. In terms of assembly, homodimer. The cofactor is Zn(2+).

The protein localises to the cytoplasm. It carries out the reaction tRNA(Met) + L-methionine + ATP = L-methionyl-tRNA(Met) + AMP + diphosphate. Functionally, is required not only for elongation of protein synthesis but also for the initiation of all mRNA translation through initiator tRNA(fMet) aminoacylation. The protein is Methionine--tRNA ligase of Saccharophagus degradans (strain 2-40 / ATCC 43961 / DSM 17024).